The following is a 540-amino-acid chain: Putative F-box/LRR-repeat protein At5g41840 (540 aa).

The F-box domain occupies 13 to 61 (GDRISGLPDALICHILSFLPTKEAASTTVLAKRWKPLLAFVPNLNFDDS). LRR repeat units lie at residues 80–105 (FMSF…HVKC), 137–165 (RNYC…KIQF), 189–214 (YFKI…VLAN), 217–242 (WADS…NFCR), 254–282 (YEDY…EYSD), 329–360 (ILYL…TIKT), and 361–386 (TPYV…VFEG).

The polypeptide is Putative F-box/LRR-repeat protein At5g41840 (Arabidopsis thaliana (Mouse-ear cress)).